Consider the following 344-residue polypeptide: MTADISLRPADHPAIKSGKIGVLLVNLGTPDGTDYTSMRRYLKEFLTDRRVIEWSPWKWYPILFGIVLNTRPQKVGKAYELIWNKEKNESYLRTYTRNQAELMAKRLHDLANVKVDWAMRYGTPSIASRIETLKQEGCDRILLFPLYPQYAAATTATVNDKAFQKLLSMRWQPALRTVPDYHDDETYIEALAQSVERHLSSLDWKPDMLLASFHGIPMSYFKQGDPYYCQCQKTGRLLRERLGLTQENFMVTFQSRFGPEEWLQPYTDKTVEKLAQDGVKRIAVINPGFVSDCLETLEEIAEQAAHSFHENGGDKFTHIPCLNDSDDGMKVLEKVVRRELQGWV.

2 residues coordinate Fe cation: His214 and Glu295.

This sequence belongs to the ferrochelatase family.

It localises to the cytoplasm. The enzyme catalyses heme b + 2 H(+) = protoporphyrin IX + Fe(2+). It participates in porphyrin-containing compound metabolism; protoheme biosynthesis; protoheme from protoporphyrin-IX: step 1/1. In terms of biological role, catalyzes the ferrous insertion into protoporphyrin IX. This Rhizobium etli (strain ATCC 51251 / DSM 11541 / JCM 21823 / NBRC 15573 / CFN 42) protein is Ferrochelatase.